Reading from the N-terminus, the 2298-residue chain is Protein Ycf2 (2298 aa).

An ATP-binding site is contributed by 1640 to 1647; sequence GSIGTGRS.

Belongs to the Ycf2 family.

The protein localises to the plastid. It is found in the chloroplast stroma. Its function is as follows. Probable ATPase of unknown function. Its presence in a non-photosynthetic plant (Epifagus virginiana) and experiments in tobacco indicate that it has an essential function which is probably not related to photosynthesis. The polypeptide is Protein Ycf2 (Carica papaya (Papaya)).